The primary structure comprises 203 residues: MISRDDITGLILAGGRGSRMGGTDKGLQPLRGVPMAMHTLMRLSAQTGAVLINANRNLAAYESFGVPVVTDSVPDFAGPLAGMLAGLEQCQTGWMVTAPCDSPFLPTDLVQRLAQAIETEDAELAIPVTIDADGRRQTQPVFCLMPASAIDSLVAYLNGGGRKIETWAASHRLVEVPFDDAAAFANINTLDELHMHESEKRAG.

Residues 12-14, Lys25, Asn53, Asp71, and Asp101 contribute to the GTP site; that span reads LAG. Asp101 serves as a coordination point for Mg(2+).

This sequence belongs to the MobA family. In terms of assembly, monomer. Mg(2+) serves as cofactor.

Its subcellular location is the cytoplasm. The enzyme catalyses Mo-molybdopterin + GTP + H(+) = Mo-molybdopterin guanine dinucleotide + diphosphate. Transfers a GMP moiety from GTP to Mo-molybdopterin (Mo-MPT) cofactor (Moco or molybdenum cofactor) to form Mo-molybdopterin guanine dinucleotide (Mo-MGD) cofactor. The polypeptide is Molybdenum cofactor guanylyltransferase (Cupriavidus metallidurans (strain ATCC 43123 / DSM 2839 / NBRC 102507 / CH34) (Ralstonia metallidurans)).